Reading from the N-terminus, the 422-residue chain is Glutamyl-tRNA reductase (422 aa).

Residues 49-52 (TCNR), Ser107, 112-114 (EPQ), and Gln118 contribute to the substrate site. Cys50 acts as the Nucleophile in catalysis. 187–192 (GAGETI) lines the NADP(+) pocket.

Belongs to the glutamyl-tRNA reductase family. As to quaternary structure, homodimer.

It carries out the reaction (S)-4-amino-5-oxopentanoate + tRNA(Glu) + NADP(+) = L-glutamyl-tRNA(Glu) + NADPH + H(+). The protein operates within porphyrin-containing compound metabolism; protoporphyrin-IX biosynthesis; 5-aminolevulinate from L-glutamyl-tRNA(Glu): step 1/2. Catalyzes the NADPH-dependent reduction of glutamyl-tRNA(Glu) to glutamate 1-semialdehyde (GSA). The sequence is that of Glutamyl-tRNA reductase from Pseudomonas aeruginosa (strain ATCC 15692 / DSM 22644 / CIP 104116 / JCM 14847 / LMG 12228 / 1C / PRS 101 / PAO1).